A 642-amino-acid polypeptide reads, in one-letter code: 1-deoxy-D-xylulose-5-phosphate synthase 2 (642 aa).

Residues His-73 and 113–115 (SHA) contribute to the thiamine diphosphate site. Asp-144 provides a ligand contact to Mg(2+). Thiamine diphosphate contacts are provided by residues 145–146 (GA), Asn-174, Tyr-285, and Glu-366. Asn-174 provides a ligand contact to Mg(2+).

This sequence belongs to the transketolase family. DXPS subfamily. In terms of assembly, homodimer. The cofactor is Mg(2+). Thiamine diphosphate is required as a cofactor.

It carries out the reaction D-glyceraldehyde 3-phosphate + pyruvate + H(+) = 1-deoxy-D-xylulose 5-phosphate + CO2. It participates in metabolic intermediate biosynthesis; 1-deoxy-D-xylulose 5-phosphate biosynthesis; 1-deoxy-D-xylulose 5-phosphate from D-glyceraldehyde 3-phosphate and pyruvate: step 1/1. Catalyzes the acyloin condensation reaction between C atoms 2 and 3 of pyruvate and glyceraldehyde 3-phosphate to yield 1-deoxy-D-xylulose-5-phosphate (DXP). The chain is 1-deoxy-D-xylulose-5-phosphate synthase 2 from Streptomyces avermitilis (strain ATCC 31267 / DSM 46492 / JCM 5070 / NBRC 14893 / NCIMB 12804 / NRRL 8165 / MA-4680).